Consider the following 205-residue polypeptide: Ribosomal RNA small subunit methyltransferase G (205 aa).

Residues glycine 66, phenylalanine 71, 119–120, and arginine 135 each bind S-adenosyl-L-methionine; that span reads IE.

This sequence belongs to the methyltransferase superfamily. RNA methyltransferase RsmG family.

The protein resides in the cytoplasm. The enzyme catalyses guanosine(527) in 16S rRNA + S-adenosyl-L-methionine = N(7)-methylguanosine(527) in 16S rRNA + S-adenosyl-L-homocysteine. In terms of biological role, specifically methylates the N7 position of guanine in position 527 of 16S rRNA. The polypeptide is Ribosomal RNA small subunit methyltransferase G (Rhizobium johnstonii (strain DSM 114642 / LMG 32736 / 3841) (Rhizobium leguminosarum bv. viciae)).